The sequence spans 250 residues: Glycerol-1-phosphate phosphohydrolase 1 (250 aa).

Residue D18 is the Nucleophile of the active site. Positions 18 and 20 each coordinate Mg(2+). D20 functions as the Proton donor in the catalytic mechanism. K64 is covalently cross-linked (Glycyl lysine isopeptide (Lys-Gly) (interchain with G-Cter in SUMO); alternate). A Glycyl lysine isopeptide (Lys-Gly) (interchain with G-Cter in ubiquitin); alternate cross-link involves residue K64. S90 is modified (phosphoserine). K144 is covalently cross-linked (Glycyl lysine isopeptide (Lys-Gly) (interchain with G-Cter in ubiquitin)). D179 contacts Mg(2+).

The protein belongs to the HAD-like hydrolase superfamily. DOG/GPP family. In terms of assembly, monomer. Requires Mg(2+) as cofactor.

Its subcellular location is the cytoplasm. The protein resides in the nucleus. The enzyme catalyses sn-glycerol 1-phosphate + H2O = glycerol + phosphate. The catalysed reaction is sn-glycerol 3-phosphate + H2O = glycerol + phosphate. In terms of biological role, major isoform of glycerol-1-phosphate phosphohydrolase involved in glycerol biosynthesis. Plays a role in osmoadaptation and required for adaptation to anaerobic conditions. The protein is Glycerol-1-phosphate phosphohydrolase 1 of Saccharomyces cerevisiae (strain ATCC 204508 / S288c) (Baker's yeast).